Here is a 268-residue protein sequence, read N- to C-terminus: Shikimate dehydrogenase (NADP(+)) (268 aa).

Shikimate is bound by residues 13–15 and Thr-60; that span reads SLS. Residue Lys-64 is the Proton acceptor of the active site. An NADP(+)-binding site is contributed by Asp-76. Positions 85 and 100 each coordinate shikimate. NADP(+) contacts are provided by residues 124 to 128, 148 to 153, and Ile-209; these read GAGGA and NRTMSR. Tyr-211 lines the shikimate pocket. Residue Gly-232 participates in NADP(+) binding.

Belongs to the shikimate dehydrogenase family. In terms of assembly, homodimer.

It carries out the reaction shikimate + NADP(+) = 3-dehydroshikimate + NADPH + H(+). Its pathway is metabolic intermediate biosynthesis; chorismate biosynthesis; chorismate from D-erythrose 4-phosphate and phosphoenolpyruvate: step 4/7. Functionally, involved in the biosynthesis of the chorismate, which leads to the biosynthesis of aromatic amino acids. Catalyzes the reversible NADPH linked reduction of 3-dehydroshikimate (DHSA) to yield shikimate (SA). The chain is Shikimate dehydrogenase (NADP(+)) from Staphylococcus haemolyticus (strain JCSC1435).